The chain runs to 757 residues: Cartilage oligomeric matrix protein (757 aa).

The first 20 residues, 1–20 (MVPDTACVLLLTLAALGASG), serve as a signal peptide directing secretion. Residues 22–86 (GQSPLGSDLG…SVRTGLPSVR (65 aa)) form a COMP N-terminal region. The EGF-like 1 domain occupies 87 to 126 (PLLHCAPGFCFPGVACIQTESGARCGPCPAGFTGNGSHCT). 21 cysteine pairs are disulfide-bonded: cysteine 91/cysteine 102, cysteine 96/cysteine 111, cysteine 114/cysteine 125, cysteine 131/cysteine 142, cysteine 136/cysteine 151, cysteine 154/cysteine 178, cysteine 184/cysteine 197, cysteine 191/cysteine 206, cysteine 209/cysteine 221, cysteine 229/cysteine 243, cysteine 237/cysteine 253, cysteine 255/cysteine 266, cysteine 282/cysteine 287, cysteine 292/cysteine 312, cysteine 328/cysteine 348, cysteine 351/cysteine 371, cysteine 387/cysteine 407, cysteine 410/cysteine 430, cysteine 448/cysteine 468, cysteine 484/cysteine 504, and cysteine 520/cysteine 741. N-linked (GlcNAc...) asparagine glycosylation occurs at asparagine 121. The EGF-like 2; calcium-binding domain occupies 127–179 (DVNECNAHPCFPRVRCINTSPGFRCEACPPGYSGPTHQGVGLAFAKANKQVCT). Positions 180–222 (DINECETGQHNCVPNSVCINTRGSFQCGPCQPGFVGDQASGCQ) constitute an EGF-like 3; calcium-binding domain. The region spanning 225–267 (AQRFCPDGSPSECHEHADCVLERDGSRSCVCAVGWAGNGILCG) is the EGF-like 4 domain. TSP type-3 repeat units lie at residues 268–300 (RDTD…NSGQ), 301–336 (EDVD…NPDQ), 337–359 (RNTD…NDDQ), 360–395 (KDTD…NSDQ), 396–418 (KDSD…NPDQ), 419–456 (ADVD…NSAQ), 457–492 (EDSD…NPGQ), and 493–528 (EDAD…EVTL). Positions 298–503 (SGQEDVDRDG…DADRDGVGDV (206 aa)) are disordered. 2 stretches are compositionally biased toward basic and acidic residues: residues 334–346 (PDQR…KWGD) and 352–370 (RSQK…RGDA). A Cell attachment site motif is present at residues 367–369 (RGD). Over residues 467–476 (ACDDDDDNDG) the composition is skewed to acidic residues. The mediates cell survival and induction of the IAP family of survival proteins stretch occupies residues 527 to 757 (TLTDFRAFQT…DYETHQLRQA (231 aa)). Residues 532 to 746 (RAFQTVVLDP…LRYRCNDTIP (215 aa)) form the TSP C-terminal domain. N-linked (GlcNAc...) asparagine glycosylation is present at asparagine 742.

This sequence belongs to the thrombospondin family. In terms of assembly, pentamer; disulfide-linked. Exists in a more compact conformation in the presence of calcium and shows a more extended conformation in the absence of calcium. Interacts with ITGB3, ITGA5 and FN1. Binding to FN1 requires the presence of divalent cations (Ca(2+), Mg(2+) or Mn(2+)). The greatest amount of binding is seen in the presence of Mn(2+). Interacts with MATN1, MATN3, MATN4 and ACAN. Binds heparin, heparan sulfate and chondroitin sulfate. EDTA dimishes significantly its binding to ACAN and abolishes its binding to MATN3, MATN4 and chondroitin sulfate. Interacts with collagen I, II and IX, and interaction with these collagens is dependent on the presence of zinc ions. Interacts with ADAMTS12. Interacts with ITGA7. Ca(2+) serves as cofactor. Post-translationally, proteolytically cleaved by metalloproteases ADAMTS4 and ADAMTS1 with ADAMTS4 showing more potent activity. Abundantly expressed in the chondrocyte extracellular matrix, and is also found in bone, tendon, ligament and synovium and blood vessels. Increased amounts are produced during late stages of osteoarthritis in the area adjacent to the main defect.

Its subcellular location is the secreted. It localises to the extracellular space. The protein localises to the extracellular matrix. Functionally, plays a role in the structural integrity of cartilage via its interaction with other extracellular matrix proteins such as the collagens and fibronectin. Can mediate the interaction of chondrocytes with the cartilage extracellular matrix through interaction with cell surface integrin receptors. Could play a role in the pathogenesis of osteoarthritis. Potent suppressor of apoptosis in both primary chondrocytes and transformed cells. Suppresses apoptosis by blocking the activation of caspase-3 and by inducing the IAP family of survival proteins (BIRC3, BIRC2, BIRC5 and XIAP). Essential for maintaining a vascular smooth muscle cells (VSMCs) contractile/differentiated phenotype under physiological and pathological stimuli. Maintains this phenotype of VSMCs by interacting with ITGA7. This is Cartilage oligomeric matrix protein from Homo sapiens (Human).